A 62-amino-acid polypeptide reads, in one-letter code: 2-hydroxymuconate tautomerase (62 aa).

The Proton acceptor; via imino nitrogen role is filled by Pro2. Residue 9 to 12 (LEGR) coordinates substrate.

The protein belongs to the 4-oxalocrotonate tautomerase family. In terms of assembly, homohexamer.

The enzyme catalyses (2Z,4E)-2-hydroxyhexa-2,4-dienedioate = (3E)-2-oxohex-3-enedioate. In terms of biological role, catalyzes both 1,3- and 1,5-keto-enol tautomerization of the diacid 2-hydroxymuconate (2-hydroxy-2,4-hexadienedioate) to produce 2-oxo-4-hexenedioate. This reaction is highly stereoselective and produces a mixture of stereoisomers, where the (3S)-isomer of 2-oxo-4-hexenedioate predominates. Also catalyzes the tautomerization of 2-hydroxymuconate to 2-oxo-3-hexenedioate, however this reaction is slower and occurs after the tautomerization of 2-hydroxymuconate to 2-oxo-4-hexenedioate. Using 2-hydroxy-2,4-pentadienoate, phenylenolpyruvate, (p-hydroxyphenyl)-enolpyruvate and 2-hydroxy-2,4-heptadiene-1,7-dioate, YwhB is a highly efficient 1,3-keto-enol tautomerase, but clearly not a 1,5-keto-enol tautomerase. Tautomerization of the two monoacids 2-hydroxy-2,4-pentadienoate and phenylenolpyruvate produces a mixture of stereoisomers, where the (3R)-isomers predominate. The polypeptide is 2-hydroxymuconate tautomerase (ywhB) (Bacillus subtilis (strain 168)).